The chain runs to 190 residues: Potassium-transporting ATPase KdpC subunit (190 aa).

Residues 10-30 (TFIFLLLITGGVYPLLTTVLG) form a helical membrane-spanning segment.

Belongs to the KdpC family. The system is composed of three essential subunits: KdpA, KdpB and KdpC.

The protein resides in the cell inner membrane. Part of the high-affinity ATP-driven potassium transport (or Kdp) system, which catalyzes the hydrolysis of ATP coupled with the electrogenic transport of potassium into the cytoplasm. This subunit acts as a catalytic chaperone that increases the ATP-binding affinity of the ATP-hydrolyzing subunit KdpB by the formation of a transient KdpB/KdpC/ATP ternary complex. The protein is Potassium-transporting ATPase KdpC subunit of Escherichia coli (strain SE11).